A 91-amino-acid chain; its full sequence is Small ribosomal subunit protein uS15c (91 aa).

Belongs to the universal ribosomal protein uS15 family. As to quaternary structure, part of the 30S ribosomal subunit.

The protein resides in the plastid. It localises to the chloroplast. In Adiantum capillus-veneris (Maidenhair fern), this protein is Small ribosomal subunit protein uS15c (rps15).